The following is a 461-amino-acid chain: MTKTVRSETDTFGPIDVPAAALWGAQTQRSLAHFRISSEKMPPELILALARVKRACAEANRGLGKLDDAKAAAIAGAADEVLAGRHDGEFPLSVWQTGSGTQSNMNMNEVLANRASELLGGRRGPGRLVHPNDDVNLGQSSNDIFPTAMHVAAATQVKERLLPSLDLLRHALESKAEAFADVVKIGRTHLQDATPLTLGQEISGWAAQLALSEQAVRAALPMLCQLAVGGTAVGTGLNTDPSFGAAVAARLAEQSGLPFESAGNKFAALAGHEPLVFAHGALKTLAAALMKIANDIRWLASGPRSGLGELSLPENEPGSSIMPGKVNPTQCEAMTMLCCQVLGNDAALAIGAASGNFELNVFKPLIAHNFLQSARLLADGMDSLREHCVDGMEANRARIAELMARSLMLVTALNPHIGYDKAAAIAKHAHRHGTTLREAALALGHLSAEQFDAWVRPEDMV.

Substrate-binding positions include 99–101, R127, 130–133, 140–142, and T188; these read SGT, HPND, and SSN. Catalysis depends on H189, which acts as the Proton donor/acceptor. S319 is a catalytic residue. Substrate is bound by residues S320 and 325-327; that span reads KVN.

This sequence belongs to the class-II fumarase/aspartase family. Fumarase subfamily. As to quaternary structure, homotetramer.

It localises to the cytoplasm. It carries out the reaction (S)-malate = fumarate + H2O. The protein operates within carbohydrate metabolism; tricarboxylic acid cycle; (S)-malate from fumarate: step 1/1. In terms of biological role, involved in the TCA cycle. Catalyzes the stereospecific interconversion of fumarate to L-malate. This Chromobacterium violaceum (strain ATCC 12472 / DSM 30191 / JCM 1249 / CCUG 213 / NBRC 12614 / NCIMB 9131 / NCTC 9757 / MK) protein is Fumarate hydratase class II.